A 955-amino-acid chain; its full sequence is MPLIMEDGINVDDLFGEPGSLELGLSPSTTSPRGLAQRLDEMRLIGCCQKIAWSKLGCIAYISQDGLRVNVRHLQCRPSDGKWVLSEETPLLPVTDAHGGHTLVHLCWNEPGVELAVADSSGRVSIYSISIALNSIAGHRQAAFDPDDDGAQIVGMMWLNTQRTVHSFYQAAKVQGRWAYSPFRRRPIGPFHPVNKAGLVCVTRSGIIRLLYQNPDGRWAEISAELKNTGYSDRLLTHAALVSTQGGILIATHSACQKLCLYRVHIAWTPTQYDPGQQKPPVPWPVPSFRFLHCKVESQCDVRGTNRHAGDNAPGLPSFTNSLYCLTGLDIVLPALDNPAGSTANPWVVAIYSAPLHVTQDHPQQQGPASVFVRWQLDTGPLTLHPKFDDVPSKKNNAQVKPKLELRRLDDVYSDKYAISIDQIEYGNVLAITYDDGSVVFYDPKTMAVVNGVDDANTVTSLAQAGFHHPPEPSGLHISFSPNACAAVMLDGEGQTHLRLTEHSYGAEGGLHDENKYSAAIAALTLAFCRGCGSDVNTDDILLILVRQLTPEAQATFINEAYRALPINCNFTVEQDKLMNHPYIPRCLSIQAALGFKNKYTPRSFASSIPWAVLQLRHASVLYAFFFQYNKGGTTEPHDPDVLRMVLGNTKWALDFSFYVLNELFDLADDFESLSGDQEAFTQKLKSTSSLPLIILLSSMSRAFLRFICRGLRGIYAGYATAAPLSGDARVYYAEIYQTLESAPIRIDAYEKFLAGVDSAVRHAYHGAGFGDAERPGPEKELLVNARVPPVLVPAVSTILRQTVPALKTEIDRITIYMGDYSWLGLSNDRRTEMYRRSRDVDIIKKIPCRPTASALPETNANANANQNGKSSTQVQQRRRRCVRCCEVSSDTHPPRSLLSFRMIVKLGLLRACVCGGMWTLEPSVYSSAQPSGAPVGQATGRTPALVAAGLAGSS.

The disordered stretch occupies residues 855-874 (ALPETNANANANQNGKSSTQ). Polar residues predominate over residues 857–873 (PETNANANANQNGKSST).

It belongs to the Mediator complex subunit 16 family. As to quaternary structure, component of the Mediator complex.

It localises to the nucleus. Functionally, component of the Mediator complex, a coactivator involved in the regulated transcription of nearly all RNA polymerase II-dependent genes. Mediator functions as a bridge to convey information from gene-specific regulatory proteins to the basal RNA polymerase II transcription machinery. Mediator is recruited to promoters by direct interactions with regulatory proteins and serves as a scaffold for the assembly of a functional preinitiation complex with RNA polymerase II and the general transcription factors. This chain is Mediator of RNA polymerase II transcription subunit 16 (sin4), found in Aspergillus fumigatus (strain ATCC MYA-4609 / CBS 101355 / FGSC A1100 / Af293) (Neosartorya fumigata).